Here is a 241-residue protein sequence, read N- to C-terminus: MWTVRTEGGHFPLHSPTFSWRNVAFLLLLSLALEWTSAMLTKKIKHKPGLCPKERLTCTTELPDSCNTDFDCKEYQKCCFFACQKKCMDPFQEPCMLPVRHGNCNHEAQRWHFDFKNYRCTPFKYRGCEGNANNFLNEDACRTACMLIVKDGQCPLFPFTERKECPPSCHSDIDCPQTDKCCESRCGFVCARAWTVKKGFCPRKPLLCTKIDKPKCLQDEECPLVEKCCSHCGLKCMDPRR.

Positions 1 to 38 (MWTVRTEGGHFPLHSPTFSWRNVAFLLLLSLALEWTSA) are cleaved as a signal peptide. Residues 44–91 (IKHKPGLCPKERLTCTTELPDSCNTDFDCKEYQKCCFFACQKKCMDPF) enclose the WAP 1 domain. Intrachain disulfides connect Cys51/Cys79, Cys58/Cys83, Cys66/Cys78, Cys72/Cys87, Cys95/Cys145, Cys104/Cys128, Cys120/Cys141, Cys154/Cys182, Cys165/Cys186, Cys169/Cys181, Cys175/Cys190, Cys201/Cys229, Cys208/Cys232, Cys216/Cys228, and Cys222/Cys236. Residues 95 to 145 (CMLPVRHGNCNHEAQRWHFDFKNYRCTPFKYRGCEGNANNFLNEDACRTAC) form the BPTI/Kunitz inhibitor domain. WAP domains lie at 147–194 (LIVK…ARAW) and 195–240 (TVKK…MDPR).

As to expression, expressed ubiquitously, the highest levels are found in the epididymis followed by testis and trachea.

The protein localises to the secreted. This is WAP four-disulfide core domain protein 8 (WFDC8) from Homo sapiens (Human).